Reading from the N-terminus, the 367-residue chain is Glutamate 5-kinase (367 aa).

Lys-10 contacts ATP. Residues Ser-50, Asp-137, and Asn-149 each coordinate substrate. ATP contacts are provided by residues 169–170 (TD) and 211–217 (TGGMGTK). A PUA domain is found at 275 to 353 (AGEITVDEGA…QQIDAILGYE (79 aa)).

Belongs to the glutamate 5-kinase family.

The protein localises to the cytoplasm. The enzyme catalyses L-glutamate + ATP = L-glutamyl 5-phosphate + ADP. Its pathway is amino-acid biosynthesis; L-proline biosynthesis; L-glutamate 5-semialdehyde from L-glutamate: step 1/2. Catalyzes the transfer of a phosphate group to glutamate to form L-glutamate 5-phosphate. The sequence is that of Glutamate 5-kinase from Citrobacter koseri (strain ATCC BAA-895 / CDC 4225-83 / SGSC4696).